Reading from the N-terminus, the 123-residue chain is Small ribosomal subunit protein uS12c (123 aa).

It belongs to the universal ribosomal protein uS12 family. In terms of assembly, part of the 30S ribosomal subunit.

It is found in the plastid. The protein resides in the chloroplast. Functionally, with S4 and S5 plays an important role in translational accuracy. Located at the interface of the 30S and 50S subunits. This chain is Small ribosomal subunit protein uS12c (rps12), found in Physcomitrium patens (Spreading-leaved earth moss).